Here is a 935-residue protein sequence, read N- to C-terminus: Intimin (935 aa).

The N-terminal stretch at 1 to 41 (MITHGFYARTRHKHKLKKTFIMLSAGLGLFFYVNQNSFANG) is a signal peptide. The tract at residues 40–153 (NGENYFKLSS…KMTKMSPDAT (114 aa)) is peptidoglycan-binding. Positions 40–153 (NGENYFKLSS…KMTKMSPDAT (114 aa)) are sufficient for homodimerization. The tract at residues 40 to 212 (NGENYFKLSS…LQAWLQHYGT (173 aa)) is required for periplasmic localization. The LysM domain occupies 63 to 112 (LFYTLKTGETVSSISKSQGISLSVIWSLNKHLYSSESEMLKAAPGQQIIL). Positions 210–411 (YGTAEVNLQS…LYSMQFRYQF (202 aa)) are inverse autotransporter. The segment at 402 to 411 (LYSMQFRYQF) is signature sequence for beta-barrel assembly machinery (BAM), which recognizes the unfolded beta-barrel in the periplasm. 2 Big-1 domains span residues 560-653 (VTDF…VIFV) and 660-754 (ITEI…VTFF). One can recognise a BIG2 domain in the interval 790–834 (GGNGTYSWHSENTNIATVDESGKVTLKGKGTAVINVTSGDKQTVS). Cys-859 and Cys-933 form a disulfide bridge.

This sequence belongs to the intimin/invasin family. As to quaternary structure, homodimer. Interacts with Tir.

Its subcellular location is the cell outer membrane. Its function is as follows. An inverse autotransporter. Adhesin, which mediates attachment to the human intestine epithelial cells. Necessary for the production of attaching and effacing lesions on infected human tissue culture cells. Anchored to the outer membrane by binding to peptidoglycan (PGN) via its periplasmic domain, thus helping in receptor interactions during host invasion. PGN-binding may also aid in resisting mechanical and chemical stress during transit of the bacterium through the gastrointestinal tract of the host. The protein is Intimin (eae) of Escherichia coli O111:H-.